The primary structure comprises 173 residues: Inorganic pyrophosphatase (173 aa).

Substrate contacts are provided by K29, R43, and Y55. Residues D65, D70, and D102 each coordinate Mg(2+). A substrate-binding site is contributed by Y141.

Belongs to the PPase family. In terms of assembly, homohexamer. Mg(2+) serves as cofactor.

The protein localises to the cytoplasm. It catalyses the reaction diphosphate + H2O = 2 phosphate + H(+). In terms of biological role, catalyzes the hydrolysis of inorganic pyrophosphate (PPi) forming two phosphate ions. This is Inorganic pyrophosphatase from Rickettsia felis (strain ATCC VR-1525 / URRWXCal2) (Rickettsia azadi).